The following is a 264-amino-acid chain: tRNA pseudouridine synthase A (264 aa).

Asp-51 serves as the catalytic Nucleophile. Position 109 (Tyr-109) interacts with substrate.

It belongs to the tRNA pseudouridine synthase TruA family. In terms of assembly, homodimer.

The catalysed reaction is uridine(38/39/40) in tRNA = pseudouridine(38/39/40) in tRNA. In terms of biological role, formation of pseudouridine at positions 38, 39 and 40 in the anticodon stem and loop of transfer RNAs. The chain is tRNA pseudouridine synthase A from Polaromonas sp. (strain JS666 / ATCC BAA-500).